Consider the following 860-residue polypeptide: Leucine--tRNA ligase (860 aa).

Positions 42 to 52 match the 'HIGH' region motif; that stretch reads PYPSGRLHMGH. The 'KMSKS' region signature appears at 619–623; it reads KMSKS. Lys-622 contributes to the ATP binding site.

This sequence belongs to the class-I aminoacyl-tRNA synthetase family.

Its subcellular location is the cytoplasm. The enzyme catalyses tRNA(Leu) + L-leucine + ATP = L-leucyl-tRNA(Leu) + AMP + diphosphate. The sequence is that of Leucine--tRNA ligase from Salmonella enteritidis PT4 (strain P125109).